Consider the following 203-residue polypeptide: Small ribosomal subunit protein uS4 (203 aa).

Residues 93–173 (RRFDNVVFRS…IPSWIQVDKA (81 aa)) form the S4 RNA-binding domain.

It belongs to the universal ribosomal protein uS4 family. Part of the 30S ribosomal subunit. Contacts protein S5. The interaction surface between S4 and S5 is involved in control of translational fidelity.

Functionally, one of the primary rRNA binding proteins, it binds directly to 16S rRNA where it nucleates assembly of the body of the 30S subunit. With S5 and S12 plays an important role in translational accuracy. This Chlorobium phaeobacteroides (strain DSM 266 / SMG 266 / 2430) protein is Small ribosomal subunit protein uS4.